Consider the following 154-residue polypeptide: Large ribosomal subunit protein eL24 (154 aa).

The segment at 92 to 154 (AKRNQKPEVR…AAAPRVGGKR (63 aa)) is disordered. Residues 96–122 (QKPEVRKAQREQAVKAAKEKKKADQVG) show a composition bias toward basic and acidic residues. Positions 129–154 (KARATAPKTKAPKTVKAAAPRVGGKR) are enriched in low complexity.

The protein belongs to the eukaryotic ribosomal protein eL24 family.

This Branchiostoma belcheri (Amphioxus) protein is Large ribosomal subunit protein eL24 (RPL24).